The following is a 98-amino-acid chain: NADH-ubiquinone oxidoreductase chain 4L (98 aa).

3 helical membrane passes run methionine 1–isoleucine 21, threonine 29–threonine 49, and threonine 59–valine 79.

This sequence belongs to the complex I subunit 4L family. Core subunit of respiratory chain NADH dehydrogenase (Complex I) which is composed of 45 different subunits.

It localises to the mitochondrion inner membrane. The catalysed reaction is a ubiquinone + NADH + 5 H(+)(in) = a ubiquinol + NAD(+) + 4 H(+)(out). Core subunit of the mitochondrial membrane respiratory chain NADH dehydrogenase (Complex I) which catalyzes electron transfer from NADH through the respiratory chain, using ubiquinone as an electron acceptor. Part of the enzyme membrane arm which is embedded in the lipid bilayer and involved in proton translocation. The chain is NADH-ubiquinone oxidoreductase chain 4L (MT-ND4L) from Sminthopsis crassicaudata (Fat-tailed dunnart).